A 710-amino-acid polypeptide reads, in one-letter code: Methionine--tRNA ligase (710 aa).

Residues proline 26–histidine 36 carry the 'HIGH' region motif. Zn(2+) is bound by residues cysteine 157, cysteine 160, cysteine 170, and cysteine 173. The 'KMSKS' region signature appears at lysine 347–serine 351. Lysine 350 contributes to the ATP binding site. Positions aspartate 604–lysine 710 constitute a tRNA-binding domain.

The protein belongs to the class-I aminoacyl-tRNA synthetase family. MetG type 1 subfamily. In terms of assembly, homodimer. It depends on Zn(2+) as a cofactor.

It is found in the cytoplasm. It carries out the reaction tRNA(Met) + L-methionine + ATP = L-methionyl-tRNA(Met) + AMP + diphosphate. Is required not only for elongation of protein synthesis but also for the initiation of all mRNA translation through initiator tRNA(fMet) aminoacylation. The chain is Methionine--tRNA ligase from Paraburkholderia xenovorans (strain LB400).